Reading from the N-terminus, the 164-residue chain is uncharacterized protein (164 aa).

Residues 107-136 form a disordered region; it reads QSESGGSGSNSRSSSDTTEPTDPPAPVRKT.

This is an uncharacterized protein from Escherichia coli (Bacteriophage T4).